Here is a 465-residue protein sequence, read N- to C-terminus: Glutamate--tRNA ligase (465 aa).

The short motif at 10-20 (PSPTGQLHIGG) is the 'HIGH' region element. Zn(2+) contacts are provided by C99, C101, C126, and E128. The 'KMSKS' region motif lies at 236–240 (KLSKR). An ATP-binding site is contributed by K239.

This sequence belongs to the class-I aminoacyl-tRNA synthetase family. Glutamate--tRNA ligase type 1 subfamily. In terms of assembly, monomer. The cofactor is Zn(2+).

The protein resides in the cytoplasm. The catalysed reaction is tRNA(Glu) + L-glutamate + ATP = L-glutamyl-tRNA(Glu) + AMP + diphosphate. Its function is as follows. Catalyzes the attachment of glutamate to tRNA(Glu) in a two-step reaction: glutamate is first activated by ATP to form Glu-AMP and then transferred to the acceptor end of tRNA(Glu). In Lawsonia intracellularis (strain PHE/MN1-00), this protein is Glutamate--tRNA ligase.